The following is a 101-amino-acid chain: Small ribosomal subunit protein bS21 (101 aa).

Residues 36 to 52 (YEKPSEKKAREKAEAVR) are compositionally biased toward basic and acidic residues. A disordered region spans residues 36–101 (YEKPSEKKAR…GPGAGPRGPR (66 aa)). Over residues 53-62 (RARKLARKKL) the composition is skewed to basic residues. The segment covering 83–101 (PGAGGPGAGGPGAGPRGPR) has biased composition (gly residues).

It belongs to the bacterial ribosomal protein bS21 family.

This is Small ribosomal subunit protein bS21 from Rhodopseudomonas palustris (strain HaA2).